Here is a 335-residue protein sequence, read N- to C-terminus: uncharacterized protein (335 aa).

3 disordered regions span residues 153–174 (LNDKEDEEKLDQTTESEESDRI), 218–239 (HTSVRRSMSSVSSSASSTQEEV), and 254–295 (RCKV…PVTS). A compositionally biased stretch (acidic residues) spans 156 to 170 (KEDEEKLDQTTESEE). Composition is skewed to low complexity over residues 222-234 (RRSMSSVSSSASS) and 275-295 (THTSVSSLSVHSVSPTPPVTS).

This is an uncharacterized protein from Caenorhabditis elegans.